The primary structure comprises 179 residues: UPF0227 protein VC0395_A1482/VC395_2007 (179 aa).

The protein belongs to the UPF0227 family.

This is UPF0227 protein VC0395_A1482/VC395_2007 from Vibrio cholerae serotype O1 (strain ATCC 39541 / Classical Ogawa 395 / O395).